The primary structure comprises 229 residues: Ribose-5-phosphate isomerase A (229 aa).

Residues 28 to 31 (TGST), 85 to 88 (DGAD), and 98 to 101 (KGRG) contribute to the substrate site. Residue Glu107 is the Proton acceptor of the active site. Lys125 contacts substrate.

This sequence belongs to the ribose 5-phosphate isomerase family. As to quaternary structure, homodimer.

It catalyses the reaction aldehydo-D-ribose 5-phosphate = D-ribulose 5-phosphate. It functions in the pathway carbohydrate degradation; pentose phosphate pathway; D-ribose 5-phosphate from D-ribulose 5-phosphate (non-oxidative stage): step 1/1. In terms of biological role, catalyzes the reversible conversion of ribose-5-phosphate to ribulose 5-phosphate. The polypeptide is Ribose-5-phosphate isomerase A (Pyrococcus abyssi (strain GE5 / Orsay)).